The following is a 484-amino-acid chain: UDP-N-acetylmuramate--L-alanine ligase (484 aa).

Gly-123–Thr-129 lines the ATP pocket.

This sequence belongs to the MurCDEF family.

It is found in the cytoplasm. The catalysed reaction is UDP-N-acetyl-alpha-D-muramate + L-alanine + ATP = UDP-N-acetyl-alpha-D-muramoyl-L-alanine + ADP + phosphate + H(+). It functions in the pathway cell wall biogenesis; peptidoglycan biosynthesis. In terms of biological role, cell wall formation. This is UDP-N-acetylmuramate--L-alanine ligase from Pseudomonas fluorescens (strain ATCC BAA-477 / NRRL B-23932 / Pf-5).